A 107-amino-acid chain; its full sequence is SOSS complex subunit C (107 aa).

The protein belongs to the SOSS-C family. Belongs to the multiprotein complex Integrator. Component of the SOSS complex, composed of soss-b (soss-b1/nabp2 or soss-b2/nabp1), soss-a/ints3 and soss-c/inip.

The protein resides in the nucleus. Functionally, component of the SOSS complex, a multiprotein complex that functions downstream of the MRN complex to promote DNA repair and G2/M checkpoint. The SOSS complex associates with single-stranded DNA at DNA lesions and influences diverse endpoints in the cellular DNA damage response including cell-cycle checkpoint activation, recombinational repair and maintenance of genomic stability. Required for efficient homologous recombination-dependent repair of double-strand breaks (DSBs). The protein is SOSS complex subunit C (inip) of Salmo salar (Atlantic salmon).